The primary structure comprises 359 residues: Protein Wnt-2 (359 aa).

An N-terminal signal peptide occupies residues 1 to 25 (MNAPLAGIWPWLPLLWAWLVPEVSS). Cystine bridges form between Cys-75–Cys-86, Cys-126–Cys-134, Cys-136–Cys-156, Cys-205–Cys-219, Cys-207–Cys-214, Cys-277–Cys-308, Cys-293–Cys-303, Cys-307–Cys-347, Cys-323–Cys-338, Cys-325–Cys-335, and Cys-330–Cys-331. Residue Ser-211 is the site of O-palmitoleoyl serine; by PORCN attachment. Residue Asn-294 is glycosylated (N-linked (GlcNAc...) asparagine).

This sequence belongs to the Wnt family. Post-translationally, palmitoleoylation is required for efficient binding to frizzled receptors. Depalmitoleoylation leads to Wnt signaling pathway inhibition.

Its subcellular location is the secreted. The protein localises to the extracellular space. The protein resides in the extracellular matrix. Ligand for members of the frizzled family of seven transmembrane receptors. Probable developmental protein. May be a signaling molecule which affects the development of discrete regions of tissues. Is likely to signal over only few cell diameters. The polypeptide is Protein Wnt-2 (WNT2) (Echinops telfairi (Lesser hedgehog tenrec)).